Consider the following 207-residue polypeptide: Large ribosomal subunit protein uL4 (207 aa).

Residues Arg-45–Val-89 form a disordered region. Over residues Gly-60–Gly-71 the composition is skewed to basic residues.

This sequence belongs to the universal ribosomal protein uL4 family. Part of the 50S ribosomal subunit.

In terms of biological role, one of the primary rRNA binding proteins, this protein initially binds near the 5'-end of the 23S rRNA. It is important during the early stages of 50S assembly. It makes multiple contacts with different domains of the 23S rRNA in the assembled 50S subunit and ribosome. Functionally, forms part of the polypeptide exit tunnel. The polypeptide is Large ribosomal subunit protein uL4 (Bacillus mycoides (strain KBAB4) (Bacillus weihenstephanensis)).